The following is a 272-amino-acid chain: 1,4-dihydroxy-2-naphthoyl-CoA synthase (272 aa).

Residues Arg-33, 72–76 (SGGDQ), Tyr-84, 116–120 (YAIGG), Thr-142, Ser-148, Tyr-245, and Lys-260 each bind substrate. 141-143 (QTG) contributes to the hydrogencarbonate binding site.

Belongs to the enoyl-CoA hydratase/isomerase family. MenB subfamily. Hydrogencarbonate is required as a cofactor.

The enzyme catalyses 2-succinylbenzoyl-CoA + H(+) = 1,4-dihydroxy-2-naphthoyl-CoA + H2O. The protein operates within quinol/quinone metabolism; 1,4-dihydroxy-2-naphthoate biosynthesis; 1,4-dihydroxy-2-naphthoate from chorismate: step 6/7. It functions in the pathway quinol/quinone metabolism; menaquinone biosynthesis. In terms of biological role, converts o-succinylbenzoyl-CoA (OSB-CoA) to 1,4-dihydroxy-2-naphthoyl-CoA (DHNA-CoA). The sequence is that of 1,4-dihydroxy-2-naphthoyl-CoA synthase from Staphylococcus epidermidis (strain ATCC 12228 / FDA PCI 1200).